We begin with the raw amino-acid sequence, 462 residues long: NEDD8-activating enzyme E1 regulatory subunit (462 aa).

This sequence belongs to the ubiquitin-activating E1 family. ULA1 subfamily. As to quaternary structure, heterodimer of UBA3 and ULA1. The complex binds NEDD8 and UBC12.

It participates in protein modification; protein neddylation. Functionally, regulatory subunit of the dimeric UBA3-ULA1 E1 enzyme. E1 activates NEDD8/RUB1 by first adenylating its C-terminal glycine residue with ATP, thereafter linking this residue to the side chain of the catalytic cysteine, yielding a NEDD8-UBA3 thioester and free AMP. E1 finally transfers NEDD8 to the catalytic cysteine of UBC12. The sequence is that of NEDD8-activating enzyme E1 regulatory subunit (ULA1) from Saccharomyces cerevisiae (strain ATCC 204508 / S288c) (Baker's yeast).